Reading from the N-terminus, the 160-residue chain is SsrA-binding protein (160 aa).

A disordered region spans residues 133–160; sequence KKEHDKREDLKEREWQRDKERMMKNKGR.

This sequence belongs to the SmpB family.

It localises to the cytoplasm. Functionally, required for rescue of stalled ribosomes mediated by trans-translation. Binds to transfer-messenger RNA (tmRNA), required for stable association of tmRNA with ribosomes. tmRNA and SmpB together mimic tRNA shape, replacing the anticodon stem-loop with SmpB. tmRNA is encoded by the ssrA gene; the 2 termini fold to resemble tRNA(Ala) and it encodes a 'tag peptide', a short internal open reading frame. During trans-translation Ala-aminoacylated tmRNA acts like a tRNA, entering the A-site of stalled ribosomes, displacing the stalled mRNA. The ribosome then switches to translate the ORF on the tmRNA; the nascent peptide is terminated with the 'tag peptide' encoded by the tmRNA and targeted for degradation. The ribosome is freed to recommence translation, which seems to be the essential function of trans-translation. In Tolumonas auensis (strain DSM 9187 / NBRC 110442 / TA 4), this protein is SsrA-binding protein.